The following is a 96-amino-acid chain: MIKSELVQRIADRNPHLYLRDVEKIVNAILDEITNALSRGDRVELRGFGAFSVKHRDARVGRNPRTGAHVSVDEKVVPFFKTGKEMRERLNNGVDD.

It belongs to the bacterial histone-like protein family. Heterodimer of an alpha and a beta chain.

This protein is one of the two subunits of integration host factor, a specific DNA-binding protein that functions in genetic recombination as well as in transcriptional and translational control. The polypeptide is Integration host factor subunit beta (Methylocella silvestris (strain DSM 15510 / CIP 108128 / LMG 27833 / NCIMB 13906 / BL2)).